The primary structure comprises 137 residues: Nucleoside diphosphate kinase (137 aa).

Positions 9, 57, 85, 91, 102, and 112 each coordinate ATP. Histidine 115 acts as the Pros-phosphohistidine intermediate in catalysis.

The protein belongs to the NDK family. As to quaternary structure, homotetramer. Mg(2+) serves as cofactor.

Its subcellular location is the cytoplasm. The catalysed reaction is a 2'-deoxyribonucleoside 5'-diphosphate + ATP = a 2'-deoxyribonucleoside 5'-triphosphate + ADP. It carries out the reaction a ribonucleoside 5'-diphosphate + ATP = a ribonucleoside 5'-triphosphate + ADP. Functionally, major role in the synthesis of nucleoside triphosphates other than ATP. The ATP gamma phosphate is transferred to the NDP beta phosphate via a ping-pong mechanism, using a phosphorylated active-site intermediate. This chain is Nucleoside diphosphate kinase, found in Leptospira interrogans serogroup Icterohaemorrhagiae serovar Lai (strain 56601).